The chain runs to 143 residues: Large ribosomal subunit protein uL11 (143 aa).

The protein belongs to the universal ribosomal protein uL11 family. In terms of assembly, part of the ribosomal stalk of the 50S ribosomal subunit. Interacts with L10 and the large rRNA to form the base of the stalk. L10 forms an elongated spine to which L12 dimers bind in a sequential fashion forming a multimeric L10(L12)X complex. Post-translationally, one or more lysine residues are methylated.

Functionally, forms part of the ribosomal stalk which helps the ribosome interact with GTP-bound translation factors. This is Large ribosomal subunit protein uL11 from Beutenbergia cavernae (strain ATCC BAA-8 / DSM 12333 / CCUG 43141 / JCM 11478 / NBRC 16432 / NCIMB 13614 / HKI 0122).